A 550-amino-acid chain; its full sequence is Chaperonin GroEL (550 aa).

Residues 30–33 (TLGP), Lys-51, 87–91 (DGTTT), Gly-415, and Asp-497 each bind ATP.

The protein belongs to the chaperonin (HSP60) family. Forms a cylinder of 14 subunits composed of two heptameric rings stacked back-to-back. Interacts with the co-chaperonin GroES.

It localises to the cytoplasm. The enzyme catalyses ATP + H2O + a folded polypeptide = ADP + phosphate + an unfolded polypeptide.. Functionally, together with its co-chaperonin GroES, plays an essential role in assisting protein folding. The GroEL-GroES system forms a nano-cage that allows encapsulation of the non-native substrate proteins and provides a physical environment optimized to promote and accelerate protein folding. This chain is Chaperonin GroEL, found in Yersinia enterocolitica.